Reading from the N-terminus, the 32-residue chain is Cytochrome b6-f complex subunit 7 (32 aa).

A helical transmembrane segment spans residues 9–27; the sequence is AAVFWVLIPVGLLGGAILL.

The protein belongs to the PetM family. As to quaternary structure, the 4 large subunits of the cytochrome b6-f complex are cytochrome b6, subunit IV (17 kDa polypeptide, PetD), cytochrome f and the Rieske protein, while the 4 small subunits are PetG, PetL, PetM and PetN. The complex functions as a dimer.

The protein resides in the cellular thylakoid membrane. Component of the cytochrome b6-f complex, which mediates electron transfer between photosystem II (PSII) and photosystem I (PSI), cyclic electron flow around PSI, and state transitions. The polypeptide is Cytochrome b6-f complex subunit 7 (Prochlorococcus marinus (strain MIT 9211)).